The sequence spans 327 residues: uncharacterized protein (327 aa).

Positions 1-24 (MAMACLCLANISWATVCANSTGVA) are cleaved as a signal peptide.

It belongs to the fimbrial protein family.

It is found in the fimbrium. Part of the sfmACDHF fimbrial operon. Could contribute to adhesion to various surfaces in specific environmental niches. Increases adhesion to eukaryotic T24 bladder epithelial cells in the absence of fim genes. This is an uncharacterized protein from Escherichia coli (strain K12).